Here is a 445-residue protein sequence, read N- to C-terminus: Glycine--tRNA ligase (445 aa).

The substrate site is built by Arg97 and Glu145. ATP is bound by residues 177-179, 187-192, 262-263, and 308-311; these read RNE, FRTCEF, EI, and GLTR. Position 192-196 (192-196) interacts with substrate; it reads FEQME. Residue 304–308 coordinates substrate; sequence ETSAG.

Belongs to the class-II aminoacyl-tRNA synthetase family. As to quaternary structure, homodimer.

It is found in the cytoplasm. It carries out the reaction tRNA(Gly) + glycine + ATP = glycyl-tRNA(Gly) + AMP + diphosphate. Functionally, catalyzes the attachment of glycine to tRNA(Gly). The polypeptide is Glycine--tRNA ligase (Borreliella afzelii (strain PKo) (Borrelia afzelii)).